We begin with the raw amino-acid sequence, 398 residues long: Cathepsin E (398 aa).

Positions 1 to 21 are cleaved as a signal peptide; that stretch reads MKPLFVLLLLLLLLDLAQAQG. A propeptide spans 22-58 (activation peptide); the sequence is VLHRVPLRRHQSLRKKLRAQGQLSDFWRSHNLDMIEF. One can recognise a Peptidase A1 domain in the interval 80–394; the sequence is YFGTVSIGSP…DRGNNQVGLA (315 aa). Asn-92 carries an N-linked (GlcNAc...) asparagine glycan. Asp-98 is a catalytic residue. 2 cysteine pairs are disulfide-bonded: Cys-111–Cys-116 and Cys-274–Cys-278. The active site involves Asp-283.

It belongs to the peptidase A1 family. In terms of assembly, homodimer; disulfide-linked. In terms of processing, glycosylated. The nature of the carbohydrate chain varies between cell types. In brain microglia, the proenzyme contains a high mannose-type oligosaccharide, while the mature enzyme contains a complex-type oligosaccharide. In stomach and spleen, the mature enzyme contains a high mannose-type oligosaccharide. In erythrocyte membranes, the mature enzyme contains a complex-type oligosaccharide. In terms of tissue distribution, expressed abundantly in lymphocytes and macrophages of the thymus and spleen, and in the M cells of the intestine. In the brain, expression is limited to reactive microglial cells, the large pyrimidial neurons in the cerebral cortex, the CA1 and CA3 pyrimidial neurons of the hippocampus, the large neurons of the neostriatum, and the Purkinje neurons of the cerebellum.

It is found in the endosome. The enzyme catalyses Similar to cathepsin D, but slightly broader specificity.. Its function is as follows. May have a role in immune function. Probably involved in the processing of antigenic peptides during MHC class II-mediated antigen presentation. May play a role in activation-induced lymphocyte depletion in the thymus, and in neuronal degeneration and glial cell activation in the brain. This Rattus norvegicus (Rat) protein is Cathepsin E (Ctse).